The sequence spans 825 residues: Actin filament-associated protein 1-like 2 (825 aa).

Tyrosine 56 is subject to Phosphotyrosine. The segment at 62–163 (VNGEQNSASP…SKGKAAPYQW (102 aa)) is disordered. Residues 80-94 (PLTNGEPSQHSSAPQ) show a composition bias toward polar residues. Position 113 is a phosphothreonine (threonine 113). PH domains follow at residues 175 to 271 (DARI…EVSG) and 353 to 447 (SLET…SESG). Serine 408 bears the Phosphoserine mark. The residue at position 413 (tyrosine 413) is a Phosphotyrosine. A Phosphoserine modification is found at serine 484. Residues 571–614 (TLTVDPKPGTTPEEPHTESPGDPEVQQRQPEVQESSEPIEPTPR) form a disordered region. A compositionally biased stretch (low complexity) spans 593-608 (PEVQQRQPEVQESSEP). The stretch at 657–754 (AEIKLGKNRT…VKDNLKKAEA (98 aa)) forms a coiled coil. The disordered stretch occupies residues 757 to 801 (VTLGTTVDTTHLDNMSPRPQPKAATPNPPPDSTPVNSASVLKNRP). Residues 759–769 (LGTTVDTTHLD) are compositionally biased toward polar residues.

In terms of assembly, interacts with SRC. Interacts with LCK when tyrosine phosphorylated. In terms of processing, tyrosine phosphorylated (by SRC).

It localises to the cytoplasm. In terms of biological role, may play a role in a signaling cascade by enhancing the kinase activity of SRC. Contributes to SRC-regulated transcription activation. The polypeptide is Actin filament-associated protein 1-like 2 (Afap1l2) (Mus musculus (Mouse)).